Here is a 191-residue protein sequence, read N- to C-terminus: Holliday junction branch migration complex subunit RuvA (191 aa).

The interval 1–63 (MIRYLRGLVL…EEGLSLYGFP (63 aa)) is domain I. Positions 64-136 (DEENLALFEL…LKGKVPPHLL (73 aa)) are domain II. The interval 136-140 (LAGEK) is flexible linker. The segment at 141–191 (VESEAAEEAVMALAALGFKEAQARAVVLDLLAQNPKARAQDLIKEALKRLR) is domain III.

The protein belongs to the RuvA family. In terms of assembly, homotetramer. Forms an RuvA(8)-RuvB(12)-Holliday junction (HJ) complex. HJ DNA is sandwiched between 2 RuvA tetramers; dsDNA enters through RuvA and exits via RuvB. An RuvB hexamer assembles on each DNA strand where it exits the tetramer. Each RuvB hexamer is contacted by two RuvA subunits (via domain III) on 2 adjacent RuvB subunits; this complex drives branch migration. In the full resolvosome a probable DNA-RuvA(4)-RuvB(12)-RuvC(2) complex forms which resolves the HJ.

It localises to the cytoplasm. Its function is as follows. The RuvA-RuvB-RuvC complex processes Holliday junction (HJ) DNA during genetic recombination and DNA repair, while the RuvA-RuvB complex plays an important role in the rescue of blocked DNA replication forks via replication fork reversal (RFR). RuvA specifically binds to HJ cruciform DNA, conferring on it an open structure. The RuvB hexamer acts as an ATP-dependent pump, pulling dsDNA into and through the RuvAB complex. HJ branch migration allows RuvC to scan DNA until it finds its consensus sequence, where it cleaves and resolves the cruciform DNA. The sequence is that of Holliday junction branch migration complex subunit RuvA from Thermus thermophilus (strain ATCC BAA-163 / DSM 7039 / HB27).